A 462-amino-acid polypeptide reads, in one-letter code: Calcitonin gene-related peptide type 1 receptor (462 aa).

The first 22 residues, 1-22 (MEKKFFLSFLFLLPFFMILVIA), serve as a signal peptide directing secretion. At 23–140 (ESEEENPDDL…NTHEKVKTAL (118 aa)) the chain is on the extracellular side. 3 cysteine pairs are disulfide-bonded: Cys49-Cys75, Cys66-Cys106, and Cys89-Cys128. 3 N-linked (GlcNAc...) asparagine glycosylation sites follow: Asn67, Asn119, and Asn124. A helical transmembrane segment spans residues 141–165 (NLFYLTIIGHVLSIASLLISLGIFF). Topologically, residues 166–176 (YFKSLSCQRIT) are cytoplasmic. A helical membrane pass occupies residues 177–199 (LHKNLFFSFVCNSVITIIHLTAV). Topologically, residues 200–210 (ANNQALVATNP) are extracellular. The chain crosses the membrane as a helical span at residues 211 to 239 (VSCKVSQFIHLYLMGCNYFWMLCEGIYLH). Residues 240–253 (TLVVVAVFAEKQHL) are Cytoplasmic-facing. The helical transmembrane segment at 254 to 274 (MWYYFLGWGFPLIPACIHAVA) threads the bilayer. The Extracellular segment spans residues 275–290 (RRLYYNDNCWISSDTQ). The tract at residues 289 to 290 (TQ) is required for RAMP3 interaction. The helical transmembrane segment at 291-315 (LLYIIHGPICAALLVNLFFLLNIVR) threads the bilayer. At 316 to 330 (VLITKLKVTHQAESN) the chain is on the cytoplasmic side. Residues 331–352 (LYMKAVRATLILVPLLGIEFVL) form a helical membrane-spanning segment. At 353-367 (IPWRPEGKIAEEIYD) the chain is on the extracellular side. A helical transmembrane segment spans residues 368 to 388 (YIINILMHYQGLLVSTIFCFF). Over 389 to 462 (NGEVQAILRR…VVIKPEKLYD (74 aa)) the chain is Cytoplasmic. 2 positions are modified to phosphoserine: Ser421 and Ser446.

This sequence belongs to the G-protein coupled receptor 2 family. As to quaternary structure, heterodimer of CALCRL and RAMP1; the receptor complex functions as CGRP receptor. Heterodimer of CALCRL and RAMP2 or CALCRL and RAMP3; the complexes function as adrenomedullin receptor.

Its subcellular location is the cell membrane. Functionally, g protein-coupled receptor which specificity is determined by its interaction with receptor-activity-modifying proteins (RAMPs). Together with RAMP1, form the receptor complex for calcitonin-gene-related peptides CALCA/CGRP1 and CALCB/CGRP2. Together with RAMP2 or RAMP3, function as receptor complexes for adrenomedullin (ADM and ADM2). Ligand binding causes a conformation change that triggers signaling via guanine nucleotide-binding proteins (G proteins) and modulates the activity of downstream effectors. Activates cAMP-dependent pathway. The polypeptide is Calcitonin gene-related peptide type 1 receptor (CALCRL) (Bos taurus (Bovine)).